Consider the following 462-residue polypeptide: tRNA modification GTPase MnmE (462 aa).

(6S)-5-formyl-5,6,7,8-tetrahydrofolate-binding residues include Arg-23, Glu-88, and Arg-127. The 160-residue stretch at 224 to 383 (GLATVIIGRP…LEKAIADLFF (160 aa)) folds into the TrmE-type G domain. A K(+)-binding site is contributed by Asn-234. GTP contacts are provided by residues 234-239 (NVGKSS), 253-259 (TDIPGTT), and 278-281 (DTAG). Ser-238 serves as a coordination point for Mg(2+). 3 residues coordinate K(+): Thr-253, Ile-255, and Thr-258. Thr-259 provides a ligand contact to Mg(2+). Residue Lys-462 coordinates (6S)-5-formyl-5,6,7,8-tetrahydrofolate.

This sequence belongs to the TRAFAC class TrmE-Era-EngA-EngB-Septin-like GTPase superfamily. TrmE GTPase family. As to quaternary structure, homodimer. Heterotetramer of two MnmE and two MnmG subunits. K(+) serves as cofactor.

The protein localises to the cytoplasm. In terms of biological role, exhibits a very high intrinsic GTPase hydrolysis rate. Involved in the addition of a carboxymethylaminomethyl (cmnm) group at the wobble position (U34) of certain tRNAs, forming tRNA-cmnm(5)s(2)U34. In Geobacillus kaustophilus (strain HTA426), this protein is tRNA modification GTPase MnmE.